The primary structure comprises 282 residues: Protoheme IX farnesyltransferase (282 aa).

Transmembrane regions (helical) follow at residues 9-29, 39-59, 79-99, 102-122, 139-159, 165-185, 210-230, 231-251, and 261-281; these read LAKPGIIFGNLITLTGGFLLA, LPLFVYVMIGVALMIAAGCVF, LVTGDISVIQATIYGTILLIL, LVLYYLVNLLTLWIIIIGFIV, VLGGISGAIPPVAGYTAVVNI, LALFLILFFWQIPHSYAIAML, IMLFYLALFVVSCALPAVLGS, ADLFSFIVCMLVALFWMYKSI, and VFAKTVFKFSIIVITAICLTM.

This sequence belongs to the UbiA prenyltransferase family. Protoheme IX farnesyltransferase subfamily.

The protein resides in the cell inner membrane. The enzyme catalyses heme b + (2E,6E)-farnesyl diphosphate + H2O = Fe(II)-heme o + diphosphate. It functions in the pathway porphyrin-containing compound metabolism; heme O biosynthesis; heme O from protoheme: step 1/1. Functionally, converts heme B (protoheme IX) to heme O by substitution of the vinyl group on carbon 2 of heme B porphyrin ring with a hydroxyethyl farnesyl side group. In Francisella tularensis subsp. holarctica (strain LVS), this protein is Protoheme IX farnesyltransferase.